Reading from the N-terminus, the 143-residue chain is MGKYNRILALDLGIKTCGFAISDQNWKISYPLEQFNFNRYDFASVISRIAFWMKEYPISILVLGYPLTLAGKISPRTKMVEYFADLVKKNYEIKVVFQDERLTTKQAQTFLLDLGISFKKRQKVIDKLAAQIILERFLNTKKG.

This sequence belongs to the YqgF nuclease family.

It localises to the cytoplasm. Could be a nuclease involved in processing of the 5'-end of pre-16S rRNA. This is Putative pre-16S rRNA nuclease from Mesomycoplasma hyopneumoniae (strain 232) (Mycoplasma hyopneumoniae).